Here is a 185-residue protein sequence, read N- to C-terminus: Large ribosomal subunit protein bL17 (185 aa).

It belongs to the bacterial ribosomal protein bL17 family. In terms of assembly, part of the 50S ribosomal subunit. Contacts protein L32.

This is Large ribosomal subunit protein bL17 from Rhodococcus erythropolis (strain PR4 / NBRC 100887).